Consider the following 114-residue polypeptide: Amphinase-2 (114 aa).

The active-site Proton acceptor is the His-15. 4 disulfides stabilise this stretch: Cys-26/Cys-79, Cys-41/Cys-85, Cys-59/Cys-100, and Cys-97/Cys-114. N-linked (GlcNAc...) asparagine glycosylation is present at Asn-27. 42–46 (KPINT) serves as a coordination point for substrate. N-linked (GlcNAc...) asparagine glycans are attached at residues Asn-67 and Asn-91. His-107 functions as the Proton donor in the catalytic mechanism.

The protein belongs to the pancreatic ribonuclease family. As to quaternary structure, monomer. In terms of processing, there are at least four different forms arising from glycan heterogeneity.

It is found in the secreted. Functionally, endonuclease, hydrolyzes highly polymerized RNA, poly(U) and poly(C), and the dinucleotides CpA and UpA. Hydrolyzes 18S and 28S ribosomal RNA. More active towards rCA than rUA or rUG. Has cytotoxic activity against cultured human submaxillary gland carcinoma cells. The protein is Amphinase-2 of Lithobates pipiens (Northern leopard frog).